We begin with the raw amino-acid sequence, 431 residues long: Glucose-1-phosphate adenylyltransferase (431 aa).

Beta-D-fructose 1,6-bisphosphate is bound at residue Lys39. Positions 40, 46, and 52 each coordinate AMP. Tyr114 provides a ligand contact to alpha-D-glucose 1-phosphate. Position 130 (Arg130) interacts with AMP. Alpha-D-glucose 1-phosphate contacts are provided by residues Gly179, 194-195 (EK), and Ser212. Positions 370 and 386 each coordinate AMP. Beta-D-fructose 1,6-bisphosphate-binding positions include 419 to 423 (REMLR) and 429 to 431 (QER).

The protein belongs to the bacterial/plant glucose-1-phosphate adenylyltransferase family. As to quaternary structure, homotetramer.

It catalyses the reaction alpha-D-glucose 1-phosphate + ATP + H(+) = ADP-alpha-D-glucose + diphosphate. The protein operates within glycan biosynthesis; glycogen biosynthesis. With respect to regulation, allosterically activated by fructose-1,6-bisphosphate (F16BP) and inhibited by AMP. Functionally, involved in the biosynthesis of ADP-glucose, a building block required for the elongation reactions to produce glycogen. Catalyzes the reaction between ATP and alpha-D-glucose 1-phosphate (G1P) to produce pyrophosphate and ADP-Glc. This chain is Glucose-1-phosphate adenylyltransferase, found in Salmonella dublin (strain CT_02021853).